The primary structure comprises 525 residues: GMP synthase [glutamine-hydrolyzing] (525 aa).

The Glutamine amidotransferase type-1 domain occupies 8 to 206 (PLLILDFGSQ…VVDICKASTD (199 aa)). The active-site Nucleophile is the Cys-85. Residues His-180 and Glu-182 contribute to the active site. The GMPS ATP-PPase domain occupies 207 to 400 (WTPEHIIDEA…LGLPHDMVYR (194 aa)). 234 to 240 (SGGVDSS) contacts ATP.

In terms of assembly, homodimer.

It carries out the reaction XMP + L-glutamine + ATP + H2O = GMP + L-glutamate + AMP + diphosphate + 2 H(+). It functions in the pathway purine metabolism; GMP biosynthesis; GMP from XMP (L-Gln route): step 1/1. Catalyzes the synthesis of GMP from XMP. The sequence is that of GMP synthase [glutamine-hydrolyzing] from Legionella pneumophila subsp. pneumophila (strain Philadelphia 1 / ATCC 33152 / DSM 7513).